Reading from the N-terminus, the 123-residue chain is uncharacterized protein (123 aa).

A run of 2 helical transmembrane segments spans residues 1–21 and 103–123; these read MVLP…AVGC and LESS…ILLF.

Its subcellular location is the membrane. This is an uncharacterized protein from Saccharomyces cerevisiae (strain ATCC 204508 / S288c) (Baker's yeast).